The primary structure comprises 252 residues: Probable transcriptional regulatory protein Bcav_1989 (252 aa).

It belongs to the TACO1 family.

It localises to the cytoplasm. The sequence is that of Probable transcriptional regulatory protein Bcav_1989 from Beutenbergia cavernae (strain ATCC BAA-8 / DSM 12333 / CCUG 43141 / JCM 11478 / NBRC 16432 / NCIMB 13614 / HKI 0122).